A 360-amino-acid chain; its full sequence is Phospho-N-acetylmuramoyl-pentapeptide-transferase (360 aa).

10 helical membrane passes run 26 to 46, 72 to 92, 94 to 114, 132 to 152, 168 to 188, 199 to 219, 236 to 256, 263 to 283, 288 to 308, and 338 to 358; these read AIVS…RMIA, PTMG…LWAY, SNPY…IGFV, WKYF…YLAG, VMPQ…VGTG, GLAI…AWAT, AGEL…FLWF, VFMG…IAVL, FLLV…ILQV, and VIVR…ATLK.

Belongs to the glycosyltransferase 4 family. MraY subfamily. Requires Mg(2+) as cofactor.

It is found in the cell inner membrane. The catalysed reaction is UDP-N-acetyl-alpha-D-muramoyl-L-alanyl-gamma-D-glutamyl-meso-2,6-diaminopimeloyl-D-alanyl-D-alanine + di-trans,octa-cis-undecaprenyl phosphate = di-trans,octa-cis-undecaprenyl diphospho-N-acetyl-alpha-D-muramoyl-L-alanyl-D-glutamyl-meso-2,6-diaminopimeloyl-D-alanyl-D-alanine + UMP. It functions in the pathway cell wall biogenesis; peptidoglycan biosynthesis. Functionally, catalyzes the initial step of the lipid cycle reactions in the biosynthesis of the cell wall peptidoglycan: transfers peptidoglycan precursor phospho-MurNAc-pentapeptide from UDP-MurNAc-pentapeptide onto the lipid carrier undecaprenyl phosphate, yielding undecaprenyl-pyrophosphoryl-MurNAc-pentapeptide, known as lipid I. The protein is Phospho-N-acetylmuramoyl-pentapeptide-transferase of Citrobacter koseri (strain ATCC BAA-895 / CDC 4225-83 / SGSC4696).